Reading from the N-terminus, the 432-residue chain is Fibrinogen gamma chain (432 aa).

The N-terminal stretch at 1-24 is a signal peptide; it reads MGRIGTPVFLAFLSALTCSLQVHA. The Fibrinogen C-terminal domain maps to 169–412; the sequence is KISPITGKDC…MTTMKLLPMG (244 aa). Residues C178 and C207 are joined by a disulfide bond. A glycan (N-linked (GlcNAc...) asparagine) is linked at N227. 4 residues coordinate Ca(2+): D340, D342, Y344, and G346. A disulfide bridge links C348 with C361. The segment at 413–432 is disordered; that stretch reads RDLSGHGGQQQSKGNSRGDN. The span at 421 to 432 shows a compositional bias: polar residues; sequence QQQSKGNSRGDN.

In terms of assembly, heterohexamer; disulfide linked. Contains 2 sets of 3 non-identical chains (alpha, beta and gamma). The 2 heterotrimers are in head to head conformation with the N-termini in a small central domain. In terms of processing, conversion of fibrinogen to fibrin is triggered by thrombin, which cleaves fibrinopeptides A and B from alpha and beta chains, and thus exposes the N-terminal polymerization sites responsible for the formation of the soft clot. The soft clot is converted into the hard clot by factor XIIIA which catalyzes the epsilon-(gamma-glutamyl)lysine cross-linking between gamma chains (stronger) and between alpha chains (weaker) of different monomers.

The protein localises to the secreted. Functionally, together with fibrinogen alpha (FGA) and fibrinogen beta (FGB), polymerizes to form an insoluble fibrin matrix. Has a major function in hemostasis as one of the primary components of blood clots. This Petromyzon marinus (Sea lamprey) protein is Fibrinogen gamma chain (FGG).